The primary structure comprises 80 residues: Peroxidase (80 aa).

The tract at residues 56–80 (DANEAEANSDLPGFNSSRSELEAAF) is disordered. Pro-67 provides a ligand contact to substrate. Asn-70 carries an N-linked (GlcNAc...) asparagine glycan.

It belongs to the peroxidase family. Classical plant (class III) peroxidase subfamily. Requires Ca(2+) as cofactor. The cofactor is heme b.

It carries out the reaction 2 a phenolic donor + H2O2 = 2 a phenolic radical donor + 2 H2O. Functionally, removal of H(2)O(2), oxidation of toxic reductants, biosynthesis and degradation of lignin, suberization, auxin catabolism, response to environmental stresses such as wounding, pathogen attack and oxidative stress. These functions might be dependent on each isozyme/isoform in each plant tissue. This is Peroxidase from Triticum aestivum (Wheat).